Consider the following 601-residue polypeptide: Probable inactive receptor kinase At1g27190 (601 aa).

The N-terminal stretch at Met-1–Ala-24 is a signal peptide. The N-linked (GlcNAc...) asparagine glycan is linked to Asn-52. LRR repeat units follow at residues Arg-73–Cys-95, Ser-97–Trp-119, Tyr-122–Cys-144, Phe-146–Asp-169, and Arg-170–Phe-192. A helical membrane pass occupies residues Ile-221 to Phe-241. A Phosphothreonine modification is found at Thr-298. Residues Phe-301–Ser-586 form the Protein kinase domain. ATP contacts are provided by residues Asp-307–Ser-315 and Lys-329. At Ser-383 the chain carries Phosphoserine. Thr-399 is modified (phosphothreonine). A Phosphotyrosine modification is found at Tyr-476. Ser-478 bears the Phosphoserine mark. At Thr-479 the chain carries Phosphothreonine. A phosphoserine mark is found at Ser-483 and Ser-586.

This sequence belongs to the protein kinase superfamily. Ser/Thr protein kinase family.

The protein resides in the membrane. In Arabidopsis thaliana (Mouse-ear cress), this protein is Probable inactive receptor kinase At1g27190.